A 114-amino-acid polypeptide reads, in one-letter code: Beta-microseminoprotein (114 aa).

Positions 1–20 (MNVLLGGFVIFATFVTLCNA) are cleaved as a signal peptide. Intrachain disulfides connect cysteine 22-cysteine 70, cysteine 38-cysteine 62, cysteine 57-cysteine 93, cysteine 60-cysteine 69, and cysteine 84-cysteine 107.

This sequence belongs to the beta-microseminoprotein family. Homodimer; Interacts with PI16.

It is found in the secreted. The protein is Beta-microseminoprotein (MSMB) of Papio anubis (Olive baboon).